The chain runs to 101 residues: Small ribosomal subunit protein uS14 (101 aa).

The protein belongs to the universal ribosomal protein uS14 family. Part of the 30S ribosomal subunit. Contacts proteins S3 and S10.

Binds 16S rRNA, required for the assembly of 30S particles and may also be responsible for determining the conformation of the 16S rRNA at the A site. The polypeptide is Small ribosomal subunit protein uS14 (Saccharophagus degradans (strain 2-40 / ATCC 43961 / DSM 17024)).